The following is a 234-amino-acid chain: 2,3-bisphosphoglycerate-dependent phosphoglycerate mutase (234 aa).

Substrate is bound by residues 10–17 (RHGSSIWN), 23–24 (TG), Arg62, 89–92 (ERHY), Lys100, 116–117 (RR), and 186–187 (GN). Residue His11 is the Tele-phosphohistidine intermediate of the active site. Glu89 acts as the Proton donor/acceptor in catalysis.

This sequence belongs to the phosphoglycerate mutase family. BPG-dependent PGAM subfamily. As to quaternary structure, homodimer.

It carries out the reaction (2R)-2-phosphoglycerate = (2R)-3-phosphoglycerate. Its pathway is carbohydrate degradation; glycolysis; pyruvate from D-glyceraldehyde 3-phosphate: step 3/5. In terms of biological role, catalyzes the interconversion of 2-phosphoglycerate and 3-phosphoglycerate. The polypeptide is 2,3-bisphosphoglycerate-dependent phosphoglycerate mutase (Wigglesworthia glossinidia brevipalpis).